A 120-amino-acid chain; its full sequence is Large ribosomal subunit protein uL14 (120 aa).

This sequence belongs to the universal ribosomal protein uL14 family. As to quaternary structure, part of the 50S ribosomal subunit. Forms a cluster with proteins L3 and L19. In the 70S ribosome, L14 and L19 interact and together make contacts with the 16S rRNA in bridges B5 and B8.

Functionally, binds to 23S rRNA. Forms part of two intersubunit bridges in the 70S ribosome. The chain is Large ribosomal subunit protein uL14 from Karelsulcia muelleri (strain GWSS) (Sulcia muelleri).